The chain runs to 297 residues: TATA-box-binding protein (297 aa).

A disordered region spans residues 52–116; that stretch reads EEQQRQQQQA…ITPATPASES (65 aa). Composition is skewed to low complexity over residues 56 to 78 and 104 to 114; these read RQQQQAQQSTSQQGNQGSGQTPQ and MTPITPATPAS. 2 tandem repeats follow at residues 123–199 and 213–290.

It belongs to the TBP family. As to quaternary structure, belongs to the TFIID complex together with the TBP-associated factors (TAFs). Binds DNA as monomer. The N-terminal domain is extensively phosphorylated.

The protein localises to the nucleus. General transcription factor that functions at the core of the DNA-binding multiprotein factor TFIID. Binding of TFIID to the TATA box is the initial transcriptional step of the pre-initiation complex (PIC), playing a role in the activation of eukaryotic genes transcribed by RNA polymerase II. Members of the TBP family are differentially required to regulate transcription and development during early embryogenesis. Binds to the promoters of select genes. In Xenopus tropicalis (Western clawed frog), this protein is TATA-box-binding protein.